The chain runs to 60 residues: UPF0509 protein Ent638_2183 (60 aa).

The protein belongs to the UPF0509 family.

The sequence is that of UPF0509 protein Ent638_2183 from Enterobacter sp. (strain 638).